The following is a 342-amino-acid chain: Platelet-activating factor receptor (342 aa).

At 1-16 (MEPNNSFRVDSEFRYT) the chain is on the extracellular side. N-linked (GlcNAc...) asparagine glycosylation occurs at N4. Residues 17–38 (LFPIFYSIVFVLGVIANSYVLW) form a helical membrane-spanning segment. Residues 39 to 54 (VFARLYPSKKFNEIKI) lie on the Cytoplasmic side of the membrane. Residues 55-74 (FMVNLTMADLLFLVTLPLWI) form a helical membrane-spanning segment. The Extracellular segment spans residues 75–91 (VYYYNQGDWILPKFLCN). An intrachain disulfide couples C90 to C173. Residues 92–113 (LAGCFFFINTYCSVAFLAVITY) form a helical membrane-spanning segment. Residues 114 to 133 (NRFQAVTRPIKTAQATTRKR) are Cytoplasmic-facing. Residues 134 to 155 (GILLSLIIWVSIVGAASYFFVL) traverse the membrane as a helical segment. Over 156–184 (DSTNREPNKTGSANITRCFEHYEKGSIPV) the chain is Extracellular. N-linked (GlcNAc...) asparagine glycans are attached at residues N163 and N169. The helical transmembrane segment at 185–205 (LTIHIFLVFSFFLVFLIILFC) threads the bilayer. The Cytoplasmic portion of the chain corresponds to 206–233 (NLVIIRTLLTQQVQIQRNAEVKRRALWM). A helical membrane pass occupies residues 234–254 (VCTVLAVFIICFVPHHLVQLP). At 255–276 (WTLAELGFQDTDFHQAINDAHQ) the chain is on the extracellular side. Residues 277 to 296 (VTLCLLSTNCVLDPIIYCFL) traverse the membrane as a helical segment. The Cytoplasmic portion of the chain corresponds to 297 to 342 (TKKFRKHLTEKLYSMRESRKCSRATSETGTEVVMQLKDVPVKSLKY).

It belongs to the G-protein coupled receptor 1 family. Interacts with ARRB1. In terms of tissue distribution, found in oviductal epithelial and stroma cells. Levels in the oviduct are raised at days 2-4 of both pregnancy and of the estrus cycle. In the endometrium, localization is predominantly to the apical borders of glandular and luminal epithelial cells. Expressed at lower levels in endometrial stromal cells. Levels in the endometrium are increased at day 20 of pregnancy (at protein level).

The protein localises to the cell membrane. Its function is as follows. Receptor for platelet activating factor, a chemotactic phospholipid mediator that possesses potent inflammatory, smooth-muscle contractile and hypotensive activity. Seems to mediate its action via a G protein that activates a phosphatidylinositol-calcium second messenger system. May be involved in the morphological and physical modifications of the oviduct and uterus during the estrus cycle and early pregnancy. The chain is Platelet-activating factor receptor from Bos taurus (Bovine).